The chain runs to 1151 residues: Semaphorin-5B (1151 aa).

At Met1–His1036 the chain is on the extracellular side. In terms of domain architecture, Sema spans His103 to Leu553. N-linked (GlcNAc...) asparagine glycosylation occurs at Asn153. Cystine bridges form between Cys172/Cys182 and Cys199/Cys208. Asn236 and Asn345 each carry an N-linked (GlcNAc...) asparagine glycan. Disulfide bonds link Cys322/Cys425 and Cys346/Cys388. Residue Asn436 is glycosylated (N-linked (GlcNAc...) asparagine). Positions Arg555–Pro602 constitute a PSI domain. 2 TSP type-1 domains span residues Asn664 to Pro720 and Pro722 to Pro771. 6 disulfide bridges follow: Cys676/Cys713, Cys680/Cys719, Cys691/Cys703, Cys734/Cys765, Cys738/Cys770, and Cys749/Cys755. An O-linked (GalNAc...) threonine glycan is attached at Thr788. TSP type-1 domains are found at residues Ser853–Pro908, Arg910–Pro965, and Glu966–Pro1010. 6 disulfides stabilise this stretch: Cys865–Cys902, Cys869–Cys907, Cys880–Cys892, Cys922–Cys959, Cys926–Cys964, and Cys937–Cys949. Residues Leu1037–Leu1057 traverse the membrane as a helical; Signal-anchor for type III membrane protein segment. The Cytoplasmic portion of the chain corresponds to Ser1058–Ser1151.

This sequence belongs to the semaphorin family.

It is found in the membrane. Its function is as follows. May act as a positive axonal guidance cue. This chain is Semaphorin-5B (SEMA5B), found in Homo sapiens (Human).